We begin with the raw amino-acid sequence, 401 residues long: Sorting nexin-4 (401 aa).

Positions 17 to 139 (FLQCLVTEPR…AFLENPNWNN (123 aa)) constitute a PX domain. Residues Arg-60, Ser-62, Lys-86, and Arg-105 each coordinate a 1,2-diacyl-sn-glycero-3-phospho-(1D-myo-inositol-3-phosphate). The residue at position 62 (Ser-62) is a Phosphoserine. A coiled-coil region spans residues 190 to 292 (ISNLEGSIQK…DVEALQEYSA (103 aa)).

Belongs to the sorting nexin family.

Its subcellular location is the cytoplasm. The protein resides in the cytosol. It is found in the preautophagosomal structure membrane. It localises to the endosome membrane. Functionally, sorting nexin, involved in the separation or division of vacuoles throughout the entire life cycle of the cells. Involved in retrieval of late-Golgi SNAREs from post-Golgi endosomes to the trans-Golgi network, for cytoplasm to vacuole transport (Cvt), and autophagy of large cargos including mitophagy, pexophagy and glycophagy. The protein is Sorting nexin-4 (snx4) of Schizosaccharomyces pombe (strain 972 / ATCC 24843) (Fission yeast).